The following is a 115-amino-acid chain: Ig heavy chain V-III region W3082 (115 aa).

The 114-residue stretch at 1 to 114 folds into the Ig-like domain; sequence EVKLEESGGG…WGQGTLVTVS (114 aa). Cys-22 and Cys-98 are joined by a disulfide.

This chain is Ig heavy chain V-III region W3082, found in Mus musculus (Mouse).